The sequence spans 40 residues: Biotin carboxylase (40 aa).

The region spanning 1 to 40 (ILVANRGEIAVRLLEEAPSPALTPELRITAYLPSGGPFVR) is the Biotin carboxylation domain. The ATP-grasp domain occupies 13–27 (LLEEAPSPALTPELR).

In terms of assembly, acetyl-CoA carboxylase is a heterohexamer of biotin carboxyl carrier protein, biotin carboxylase and the two subunits of carboxyl transferase in a 2:2 complex. The cofactor is Mg(2+). Requires Mn(2+) as cofactor.

It catalyses the reaction N(6)-biotinyl-L-lysyl-[protein] + hydrogencarbonate + ATP = N(6)-carboxybiotinyl-L-lysyl-[protein] + ADP + phosphate + H(+). It functions in the pathway lipid metabolism; malonyl-CoA biosynthesis; malonyl-CoA from acetyl-CoA: step 1/1. Its function is as follows. This protein is a component of the acetyl coenzyme A carboxylase complex; first, biotin carboxylase catalyzes the carboxylation of the carrier protein and then the transcarboxylase transfers the carboxyl group to form malonyl-CoA. The chain is Biotin carboxylase from Populus euphratica (Euphrates poplar).